The following is a 717-amino-acid chain: MSSEQKPVEDLTEEEAAAALAYLAAEIARNDALYHGNDAPEISDAEYDALKRRNDAIEARFPALVRADSPSRRVGAAPSETFMPVVHARPMLSLDNTFSQEDVQDFVAGVYRFLGRLPDQSIAFTAEPKIDGLSMSIRYENGRMVSAATRGDGTTGENVTANIRTIKEIPQTLPAGAPAVVEIRGEVYMAKSDFLALNAQMEAEGKQSYVNPRNTAAGSLRQLDAKVTASRKLKFFAYAWGEMSDMPADTQFGMVQAFGEWGFPVNPLMKRLNSVADILAHYDEIGLQRPDLDYDIDGVVYKVDSLELQARLGFRSRSPRWATAHKFPAEQALTRLLDIDIQVGRTGALTPVARLEPITVGGVVVTNATLHNADYIKGIGNKGEPIRDGRDIRIGDMVIVQRAGDVIPQIVDVVLEKREASSVAYEFPKTCPVCGSHAVRDINEKTGKVDAVTRCTGGFICRAQATEHLKHFVSRNAYDIEGLGSKQIDFFFESDDPALQVRTAPDIFTLERRQQSSLSKLENIDGFGKVSVSKLYAAINERRDIALHRFIFALGIRHVGETTAKLLARSYGTYEAFEAGMKEAAPLAGDAWNDLNNIEGVGEVVARAVVEFYKEPRNVEVISKLLDEVRPQEAEQPTTSGSPVVGKTVVFTGSLEKFTRDEAKAKAESLGAKVSGSVSKKTDIVVAGPGAGSKLDKAREFNVQVMTEDEWLELIGG.

Residues 44 to 48 (DAEYD), 93 to 94 (SL), and E127 each bind NAD(+). Catalysis depends on K129, which acts as the N6-AMP-lysine intermediate. Positions 150, 186, 302, and 326 each coordinate NAD(+). The Zn(2+) site is built by C431, C434, C455, and C461. The BRCT domain maps to 639–717 (TSGSPVVGKT…EDEWLELIGG (79 aa)).

The protein belongs to the NAD-dependent DNA ligase family. LigA subfamily. Mg(2+) is required as a cofactor. It depends on Mn(2+) as a cofactor.

The catalysed reaction is NAD(+) + (deoxyribonucleotide)n-3'-hydroxyl + 5'-phospho-(deoxyribonucleotide)m = (deoxyribonucleotide)n+m + AMP + beta-nicotinamide D-nucleotide.. Functionally, DNA ligase that catalyzes the formation of phosphodiester linkages between 5'-phosphoryl and 3'-hydroxyl groups in double-stranded DNA using NAD as a coenzyme and as the energy source for the reaction. It is essential for DNA replication and repair of damaged DNA. This chain is DNA ligase, found in Rhizobium rhizogenes (strain K84 / ATCC BAA-868) (Agrobacterium radiobacter).